We begin with the raw amino-acid sequence, 337 residues long: Adenosine deaminase-like protein (337 aa).

Zn(2+) contacts are provided by histidine 14 and histidine 16. N(6)-methyl-AMP is bound by residues histidine 16, asparagine 18, histidine 66, 98–101, and glycine 171; that span reads TTPK. Histidine 198 contacts Zn(2+). Residues glutamate 201, aspartate 276, and aspartate 277 each coordinate N(6)-methyl-AMP. The active-site Proton donor is the glutamate 201. A Zn(2+)-binding site is contributed by aspartate 276.

This sequence belongs to the metallo-dependent hydrolases superfamily. Adenosine and AMP deaminases family. In terms of assembly, monomer. The cofactor is Zn(2+).

It carries out the reaction N(6)-methyl-AMP + H2O + H(+) = IMP + methylamine. Its function is as follows. Catalyzes the hydrolysis of the free cytosolic methylated adenosine nucleotide N(6)-methyl-AMP (N6-mAMP) to produce inositol monophosphate (IMP) and methylamine. Is required for the catabolism of cytosolic N6-mAMP, which is derived from the degradation of mRNA containing N6-methylated adenine (m6A). In Drosophila melanogaster (Fruit fly), this protein is Adenosine deaminase-like protein (Ada).